A 245-amino-acid polypeptide reads, in one-letter code: Dof zinc finger protein DOF3.2 (245 aa).

A compositionally biased stretch (polar residues) spans 15-26; that stretch reads SCSTQDYQNQKK. The disordered stretch occupies residues 15–41; the sequence is SCSTQDYQNQKKPLSATRPAPPEQSLR. Residues 40 to 94 form a Dof-type zinc finger; sequence LRCPRCDSTNTKFCYYNNYSLSQPRYFCKSCRRYWTKGGILRNIPIGGAYRKHKR. 4 residues coordinate Zn(2+): Cys42, Cys45, Cys67, and Cys70. The tract at residues 91–118 is disordered; the sequence is KHKRSSSATKSLRTTPEPTMTHDGKSFP. Residues 96–108 show a composition bias toward polar residues; it reads SSATKSLRTTPEP.

Interacts with TCP14. The PEAR proteins (e.g. DOF2.4, DOF5.1, DOF3.2, DOF1.1, DOF5.6 and DOF5.3) form a short-range concentration gradient that peaks at protophloem sieve elements (PSE).

The protein resides in the nucleus. Its function is as follows. Transcription factor that negatively affects seed germination and opposes TCP14 function in the regulation of a specific set of abscisic acid-related genes. The PEAR proteins (e.g. DOF2.4, DOF5.1, DOF3.2, DOF1.1, DOF5.6 and DOF5.3) activate gene expression that promotes radial growth of protophloem sieve elements. The sequence is that of Dof zinc finger protein DOF3.2 from Arabidopsis thaliana (Mouse-ear cress).